Here is a 115-residue protein sequence, read N- to C-terminus: Large ribosomal subunit protein bL19 (115 aa).

The protein belongs to the bacterial ribosomal protein bL19 family.

Its function is as follows. This protein is located at the 30S-50S ribosomal subunit interface and may play a role in the structure and function of the aminoacyl-tRNA binding site. This Thermosipho melanesiensis (strain DSM 12029 / CIP 104789 / BI429) protein is Large ribosomal subunit protein bL19.